We begin with the raw amino-acid sequence, 291 residues long: MNTVTENVFPPREPKPKWLRVKLPTGKNYTELRGLVDKYKLNTICASGSCPNMGECWGEGTATFMILGNICTRSCGFCGVKTGRPETVDWDEPEKVARSIKLMKIKHAVITSVDRDDLKDMGSIIWAETVKAIRRMNPNTTLETLIPDFQGNTRNLDRIIEVAPEVVSHNMETVKRLTREVRIQAKYEKSLEVLRYLKAQGIKRTKSGIMLGLGEKEEEVIQVLHDLRDANVDIVTIGQYLQPSKKHLPVKEYISPEQFEKYEKIGKELGFRHVESGALVRSSYHAEKHIH.

The [4Fe-4S] cluster site is built by C45, C50, C56, C71, C75, C78, and S283. Residues 57 to 272 enclose the Radical SAM core domain; the sequence is WGEGTATFMI…EKIGKELGFR (216 aa).

This sequence belongs to the radical SAM superfamily. Lipoyl synthase family. [4Fe-4S] cluster is required as a cofactor.

The protein resides in the mitochondrion. It carries out the reaction [[Fe-S] cluster scaffold protein carrying a second [4Fe-4S](2+) cluster] + N(6)-octanoyl-L-lysyl-[protein] + 2 oxidized [2Fe-2S]-[ferredoxin] + 2 S-adenosyl-L-methionine + 4 H(+) = [[Fe-S] cluster scaffold protein] + N(6)-[(R)-dihydrolipoyl]-L-lysyl-[protein] + 4 Fe(3+) + 2 hydrogen sulfide + 2 5'-deoxyadenosine + 2 L-methionine + 2 reduced [2Fe-2S]-[ferredoxin]. Its pathway is protein modification; protein lipoylation via endogenous pathway; protein N(6)-(lipoyl)lysine from octanoyl-[acyl-carrier-protein]: step 2/2. Its function is as follows. Catalyzes the radical-mediated insertion of two sulfur atoms into the C-6 and C-8 positions of the octanoyl moiety bound to the lipoyl domains of lipoate-dependent enzymes, thereby converting the octanoylated domains into lipoylated derivatives. The sequence is that of Lipoyl synthase, mitochondrial from Nematostella vectensis (Starlet sea anemone).